Consider the following 352-residue polypeptide: Anthranilate phosphoribosyltransferase (352 aa).

5-phospho-alpha-D-ribose 1-diphosphate-binding positions include Gly-83, 86–87 (GD), Thr-91, 93–96 (NIST), 111–119 (KHGGRSVSS), and Ala-123. Residue Gly-83 participates in anthranilate binding. Residue Ser-95 participates in Mg(2+) binding. Arg-169 contributes to the anthranilate binding site. Mg(2+) is bound by residues Asp-228 and Glu-229.

Belongs to the anthranilate phosphoribosyltransferase family. As to quaternary structure, homodimer. It depends on Mg(2+) as a cofactor.

The enzyme catalyses N-(5-phospho-beta-D-ribosyl)anthranilate + diphosphate = 5-phospho-alpha-D-ribose 1-diphosphate + anthranilate. It participates in amino-acid biosynthesis; L-tryptophan biosynthesis; L-tryptophan from chorismate: step 2/5. Its function is as follows. Catalyzes the transfer of the phosphoribosyl group of 5-phosphorylribose-1-pyrophosphate (PRPP) to anthranilate to yield N-(5'-phosphoribosyl)-anthranilate (PRA). The chain is Anthranilate phosphoribosyltransferase from Neisseria meningitidis serogroup A / serotype 4A (strain DSM 15465 / Z2491).